The following is a 478-amino-acid chain: H(+)/Cl(-) exchange transporter ClcA (478 aa).

Over 1–32 the chain is Cytoplasmic; it reads MTHSTQQLSPEGVAEGKRGRLIRELVNRDKTP. Residues 33 to 69 form a helical membrane-spanning segment; sequence LIILIMAAVVGVVTGLLGVAFDRGVDWVQQQRLLALA. Residues 70-76 are Periplasmic-facing; the sequence is NVADSAL. A helical transmembrane segment spans residues 77 to 100; it reads LVWPLAFIMSALLAMMGYFLVSRF. The Selectivity filter part_1 signature appears at 106-110; it reads GSGIP. Residue Ser-107 participates in chloride binding. An intramembrane region (helical) is located at residues 109–116; that stretch reads IPEIEGAM. The Cytoplasmic segment spans residues 117–123; it reads EEMRPVR. 2 helical membrane passes run 124–141 and 148–166; these read WWRV…TLGA and EGPM…VDIF. The Selectivity filter part_2 motif lies at 146-150; that stretch reads GREGP. Topologically, residues 167–176 are cytoplasmic; that stretch reads RLRSPEARHS. 2 consecutive intramembrane regions (helical) follow at residues 177–189 and 193–201; these read LLAT…LSAA and PLAGILFVI. At 202–214 the chain is on the cytoplasmic side; sequence EEMRSQFRYSLVS. A helical transmembrane segment spans residues 215-232; the sequence is IKAVFIGVITSTIVYRYF. Topologically, residues 233 to 252 are periplasmic; it reads NGERAIIEVGKLSDAPLNTL. Residues 253–281 traverse the membrane as a helical segment; the sequence is WLYLLLGIIFGAVGVIFNALIFRTQDMFV. The Cytoplasmic segment spans residues 282 to 287; it reads RFHGGD. The chain crosses the membrane as a helical span at residues 288 to 309; it reads WRKLVLIGGLLGGMCGLLALLH. The Periplasmic segment spans residues 310 to 329; it reads GNAVGGGFALIPIAAAGNFS. Helical transmembrane passes span 330–349 and 355–376; these read IGML…LCFG and GIFA…LSCA. Residues 355-359 carry the Selectivity filter part_3 motif; that stretch reads GIFAP. Chloride-binding residues include Ile-356 and Phe-357. At 377–386 the chain is on the periplasmic side; the sequence is HFFPQYGIEA. Positions 387 to 401 form an intramembrane region, helical; sequence GTFAIAGMGALFAAS. The segment at residues 402–404 is an intramembrane region (note=Loop between two helices); it reads VRA. Positions 405–416 form an intramembrane region, helical; the sequence is PLTGIVLVLEMT. Residues 417 to 421 constitute an intramembrane region (note=Loop between two helices); that stretch reads DNYQL. The helical transmembrane segment at 422-438 threads the bilayer; that stretch reads ILPMIVTCLGATLIAQF. The Cytoplasmic portion of the chain corresponds to 439 to 478; the sequence is MGGKPLYSAILARTLAKQEQARATVIAQEPAVENTPQTGR. Tyr-445 lines the chloride pocket.

The protein belongs to the chloride channel (TC 2.A.49) family. ClcA subfamily. Homodimer.

It is found in the cell inner membrane. The enzyme catalyses 2 chloride(in) + H(+)(out) = 2 chloride(out) + H(+)(in). In terms of biological role, proton-coupled chloride transporter. Functions as antiport system and exchanges two chloride ions for 1 proton. Probably acts as an electrical shunt for an outwardly-directed proton pump that is linked to amino acid decarboxylation, as part of the extreme acid resistance (XAR) response. The protein is H(+)/Cl(-) exchange transporter ClcA of Yersinia pseudotuberculosis serotype IB (strain PB1/+).